The sequence spans 208 residues: Fibroblast growth factor-binding protein 2 (208 aa).

A signal peptide spans 1–19 (MKRVALLFLVVICGMGGLG). 3 disulfides stabilise this stretch: cysteine 43-cysteine 59, cysteine 68-cysteine 102, and cysteine 77-cysteine 113. Positions 130–181 (EPEDGANRDKSSQKTSASVRGAGKSSVKKTGKPAVLPRIKPTQHGQGSENET) are disordered. Residues cysteine 191 and cysteine 199 are joined by a disulfide bond.

This sequence belongs to the fibroblast growth factor-binding protein family.

Its subcellular location is the secreted. The protein resides in the extracellular space. The polypeptide is Fibroblast growth factor-binding protein 2 (FGFBP2) (Gallus gallus (Chicken)).